The primary structure comprises 343 residues: Sodium/bile acid cotransporter 7-B (343 aa).

The Cytoplasmic segment spans residues 1–9; the sequence is MGLLERLRK. The helical transmembrane segment at 10-30 threads the bilayer; the sequence is EWFIIGIILVIVAAKLEPTIG. Topologically, residues 31-37 are extracellular; that stretch reads EKGGPLK. Residues 38-58 traverse the membrane as a helical segment; the sequence is PEITITYIAVSAIFFNSGLSL. Residues 59-71 lie on the Cytoplasmic side of the membrane; it reads KTEELTNALMHVK. The chain crosses the membrane as a helical span at residues 72–92; it reads LHLFVQLFTLVFFPTAIWIFL. Residues 93–116 are Extracellular-facing; that stretch reads QVLSLTPINEWLLKGLQTVSCMPP. Residues 117 to 137 form a helical membrane-spanning segment; it reads PVSSAVILTKAVGGNEAAAIF. Residue asparagine 138 is a topological domain, cytoplasmic. Residues 139-159 traverse the membrane as a helical segment; it reads SAFGSFLGIVVTPLLLLLFLG. The Extracellular portion of the chain corresponds to 160-163; it reads SSSS. Residues 164 to 184 traverse the membrane as a helical segment; sequence VPFTSIFSQLFMTVVVPLIIG. Residues 185–201 are Cytoplasmic-facing; the sequence is QIVRRYIKDWLERKKPP. A helical membrane pass occupies residues 202–222; sequence FGAISSCVLLMIIYTTFCDTF. Residues 223 to 234 are Extracellular-facing; that stretch reads SNPNIDLDTFSL. Residues 235–255 form a helical membrane-spanning segment; that stretch reads VVIVFIIFFIQLAFMLLTFLF. The Cytoplasmic portion of the chain corresponds to 256 to 270; it reads STSKNSGFTPADTVA. A helical membrane pass occupies residues 271 to 291; it reads IVFCSTHKSLTLGIPMLKIVF. The Extracellular segment spans residues 292 to 298; that stretch reads AGYEHLS. The chain crosses the membrane as a helical span at residues 299–319; the sequence is LISVPLLIYHPAQILLGSVLV. The Cytoplasmic portion of the chain corresponds to 320–343; it reads PTIKSWMLSRRKALKLTRQPKIPL.

The protein belongs to the bile acid:sodium symporter (BASS) (TC 2.A.28) family.

The protein resides in the cell membrane. The protein localises to the endoplasmic reticulum membrane. It is found in the golgi apparatus membrane. Involved in teeth and skeletal development. Has an essential role in the biosynthesis and trafficking of glycosaminoglycans and glycoproteins to produce a proper functioning extracellular matrix. Required for extracellular matrix mineralization. Also involved in the regulation of cellular calcium homeostasis. Does not show transport activity towards bile acids or steroid sulfates. The protein is Sodium/bile acid cotransporter 7-B (slc10a7-b) of Xenopus laevis (African clawed frog).